The primary structure comprises 145 residues: Transcription factor MEE8 (145 aa).

The segment covering 33–49 (EKGVEKVGQKRSAESRR) has biased composition (basic and acidic residues). Residues 33–61 (EKGVEKVGQKRSAESRREGKKKRVKTQCV) are disordered. The region spanning 66-115 (DKSDHDTLLKKKRRERIRRQLETLKEITPNCPQSDINAILDCVIEYTNNL) is the bHLH domain.

In terms of assembly, homodimer.

It is found in the nucleus. Required during early embryo development, for the endosperm formation. The protein is Transcription factor MEE8 (MEE8) of Arabidopsis thaliana (Mouse-ear cress).